The chain runs to 171 residues: 6,7-dimethyl-8-ribityllumazine synthase (171 aa).

5-amino-6-(D-ribitylamino)uracil-binding positions include phenylalanine 24, 58 to 60, and 82 to 84; these read ALE and AVI. 87–88 contacts (2S)-2-hydroxy-3-oxobutyl phosphate; sequence ET. The Proton donor role is filled by histidine 90. Asparagine 115 contacts 5-amino-6-(D-ribitylamino)uracil. A (2S)-2-hydroxy-3-oxobutyl phosphate-binding site is contributed by arginine 129. The tract at residues 150 to 171 is disordered; the sequence is ALDQLGDDEDEEEDEEDEEERA. Over residues 154–171 the composition is skewed to acidic residues; it reads LGDDEDEEEDEEDEEERA.

The protein belongs to the DMRL synthase family.

The enzyme catalyses (2S)-2-hydroxy-3-oxobutyl phosphate + 5-amino-6-(D-ribitylamino)uracil = 6,7-dimethyl-8-(1-D-ribityl)lumazine + phosphate + 2 H2O + H(+). Its pathway is cofactor biosynthesis; riboflavin biosynthesis; riboflavin from 2-hydroxy-3-oxobutyl phosphate and 5-amino-6-(D-ribitylamino)uracil: step 1/2. Functionally, catalyzes the formation of 6,7-dimethyl-8-ribityllumazine by condensation of 5-amino-6-(D-ribitylamino)uracil with 3,4-dihydroxy-2-butanone 4-phosphate. This is the penultimate step in the biosynthesis of riboflavin. This is 6,7-dimethyl-8-ribityllumazine synthase from Burkholderia ambifaria (strain MC40-6).